The sequence spans 288 residues: Acetyl-coenzyme A carboxylase carboxyl transferase subunit beta (288 aa).

The CoA carboxyltransferase N-terminal domain occupies 34–288; the sequence is LFAKCPACKH…HLVAFHGGGQ (255 aa). Zn(2+)-binding residues include Cys-38, Cys-41, Cys-56, and Cys-59. The segment at 38–59 adopts a C4-type zinc-finger fold; it reads CPACKHMIYKKDLGLAKICPTC.

Belongs to the AccD/PCCB family. In terms of assembly, acetyl-CoA carboxylase is a heterohexamer composed of biotin carboxyl carrier protein (AccB), biotin carboxylase (AccC) and two subunits each of ACCase subunit alpha (AccA) and ACCase subunit beta (AccD). Zn(2+) serves as cofactor.

The protein localises to the cytoplasm. It catalyses the reaction N(6)-carboxybiotinyl-L-lysyl-[protein] + acetyl-CoA = N(6)-biotinyl-L-lysyl-[protein] + malonyl-CoA. Its pathway is lipid metabolism; malonyl-CoA biosynthesis; malonyl-CoA from acetyl-CoA: step 1/1. Component of the acetyl coenzyme A carboxylase (ACC) complex. Biotin carboxylase (BC) catalyzes the carboxylation of biotin on its carrier protein (BCCP) and then the CO(2) group is transferred by the transcarboxylase to acetyl-CoA to form malonyl-CoA. This is Acetyl-coenzyme A carboxylase carboxyl transferase subunit beta from Streptococcus pyogenes serotype M4 (strain MGAS10750).